Here is a 207-residue protein sequence, read N- to C-terminus: Small ribosomal subunit protein uS4 (207 aa).

The tract at residues 31-56 is disordered; it reads KCKLDSKPGQHGRTSGARTSDYGNQL. Residues 42 to 53 show a composition bias toward polar residues; that stretch reads GRTSGARTSDYG. Positions 97-157 constitute an S4 RNA-binding domain; sequence TRLDNVVYRM…EKSKKQVRIV (61 aa).

It belongs to the universal ribosomal protein uS4 family. As to quaternary structure, part of the 30S ribosomal subunit. Contacts protein S5. The interaction surface between S4 and S5 is involved in control of translational fidelity.

In terms of biological role, one of the primary rRNA binding proteins, it binds directly to 16S rRNA where it nucleates assembly of the body of the 30S subunit. Its function is as follows. With S5 and S12 plays an important role in translational accuracy. This Herminiimonas arsenicoxydans protein is Small ribosomal subunit protein uS4.